The primary structure comprises 169 residues: Anaerobic nitrite reductase NSHB3 (169 aa).

Positions 15–165 constitute a Globin domain; the sequence is RFTEEQEALV…LVAAIKQGMK (151 aa). A Homodimerization motif is present at residues 48–52; sequence EVAPS. S58, K72, H76, R106, T110, and H111 together coordinate heme b. Residues 118–130 carry the Homodimerization motif; that stretch reads DAHFEVAKFALLE.

This sequence belongs to the plant globin family. As to quaternary structure, homodimer. Heme b serves as cofactor.

It localises to the cytoplasm. The protein resides in the nucleus. It carries out the reaction Fe(III)-heme b-[protein] + nitric oxide + H2O = Fe(II)-heme b-[protein] + nitrite + 2 H(+). Its function is as follows. Phytoglobin that reduces nitrite to nitric oxide under anoxic conditions (e.g. during flooding or in waterlogged soil). May not function as an oxygen storage or transport protein. Has an unusually high affinity for O(2) through an hexacoordinate heme iron because of a very low dissociation constant. The sequence is that of Anaerobic nitrite reductase NSHB3 from Oryza sativa subsp. indica (Rice).